A 601-amino-acid polypeptide reads, in one-letter code: Probable translation initiation factor IF-2 (601 aa).

The tr-type G domain maps to Leu-14–Met-229. The segment at Gly-23–Thr-30 is G1. GTP is bound at residue Gly-23–Thr-30. Residues Ala-48–His-52 are G2. Residues Asp-85 to Gly-88 form a G3 region. GTP-binding positions include Asp-85–His-89 and Asn-139–Asp-142. Residues Asn-139–Asp-142 form a G4 region. Residues Ser-207 to Glu-209 form a G5 region.

This sequence belongs to the TRAFAC class translation factor GTPase superfamily. Classic translation factor GTPase family. IF-2 subfamily.

Its function is as follows. Function in general translation initiation by promoting the binding of the formylmethionine-tRNA to ribosomes. Seems to function along with eIF-2. This chain is Probable translation initiation factor IF-2, found in Haloarcula marismortui (strain ATCC 43049 / DSM 3752 / JCM 8966 / VKM B-1809) (Halobacterium marismortui).